A 137-amino-acid chain; its full sequence is Sporulation-specific cell division protein SsgB (137 aa).

Belongs to the SsgA family. Interacts with SsgA. Interacts with FtsZ (via N-terminus).

It is found in the cell septum. In terms of biological role, involved in sporulation-specific cell division. Required for early stages of sporulation. Important in the process of growth cessation prior to sporulation-specific cell division. Recruits cell division protein FtsZ to the future septum sites and tethers the contractile ring structure (Z ring) to the cytoplasmic membrane during sporulation. Stimulates polymerization and filament length of FtsZ in vitro. This Streptomyces coelicolor (strain ATCC BAA-471 / A3(2) / M145) protein is Sporulation-specific cell division protein SsgB.